Here is a 334-residue protein sequence, read N- to C-terminus: MGSIGSMGKPIEGFLVAAIQFPVPIVNSRKDIDHNIESIIRTLHATKAGYPGVELIIFPEYSTQGLNTAKWLSEEFLLDVPGKETEAYAQACKEAKVYGVFSTMERNPDSNKNPYNTAIIINPQGEIILKYRKLFPWNPIEPWYPGDLGMPVCEGPGGSKLAVCICHDGMIPELAREAAYKGCNVYIRISGYSTQVNDQWILTNRSNAWHNLMYTVSVNLAGYDNVFYYFGEGQICNFDGTTLVQGHRNPWEIVTGEIYPKMADNARLSWGLENNIYNLGHRGYVAKPGGEHDAGLTYIKDLAAGKYKLPWEDHMKIKDGSIYGYPTTGGRFGK.

The 247-residue stretch at F14–P260 folds into the CN hydrolase domain. Residue E60 is the Proton acceptor of the active site. K133 functions as the Proton donor in the catalytic mechanism. The Nucleophile role is filled by C166.

Belongs to the carbon-nitrogen hydrolase superfamily. Aliphatic amidase family.

It carries out the reaction formamide + H2O = formate + NH4(+). In terms of biological role, is an aliphatic amidase with a restricted substrate specificity, as it only hydrolyzes formamide. The sequence is that of Formamidase from Helicobacter pylori (strain HPAG1).